The primary structure comprises 120 residues: Large ribosomal subunit protein uL18 (120 aa).

Belongs to the universal ribosomal protein uL18 family. Part of the 50S ribosomal subunit; part of the 5S rRNA/L5/L18/L25 subcomplex. Contacts the 5S and 23S rRNAs.

This is one of the proteins that bind and probably mediate the attachment of the 5S RNA into the large ribosomal subunit, where it forms part of the central protuberance. The chain is Large ribosomal subunit protein uL18 from Bradyrhizobium sp. (strain BTAi1 / ATCC BAA-1182).